Here is a 415-residue protein sequence, read N- to C-terminus: Tyrosine--tRNA ligase (415 aa).

The short motif at 54-63 (PTGTDIHIGH) is the 'HIGH' region element. A 'KMSKS' region motif is present at residues 248–252 (KMSKS). Lys251 is an ATP binding site. The 65-residue stretch at 351 to 415 (AKAFYLFSKM…GKKKFLRVST (65 aa)) folds into the S4 RNA-binding domain.

The protein belongs to the class-I aminoacyl-tRNA synthetase family. TyrS type 2 subfamily. Homodimer.

The protein localises to the cytoplasm. It catalyses the reaction tRNA(Tyr) + L-tyrosine + ATP = L-tyrosyl-tRNA(Tyr) + AMP + diphosphate + H(+). Its function is as follows. Catalyzes the attachment of tyrosine to tRNA(Tyr) in a two-step reaction: tyrosine is first activated by ATP to form Tyr-AMP and then transferred to the acceptor end of tRNA(Tyr). In Prochlorococcus marinus (strain NATL2A), this protein is Tyrosine--tRNA ligase.